Here is a 278-residue protein sequence, read N- to C-terminus: 4-diphosphocytidyl-2-C-methyl-D-erythritol kinase (278 aa).

Residue lysine 9 is part of the active site. Residue 89–99 (PVASGIGGGSA) coordinates ATP. Residue aspartate 128 is part of the active site.

This sequence belongs to the GHMP kinase family. IspE subfamily.

It catalyses the reaction 4-CDP-2-C-methyl-D-erythritol + ATP = 4-CDP-2-C-methyl-D-erythritol 2-phosphate + ADP + H(+). It participates in isoprenoid biosynthesis; isopentenyl diphosphate biosynthesis via DXP pathway; isopentenyl diphosphate from 1-deoxy-D-xylulose 5-phosphate: step 3/6. Its function is as follows. Catalyzes the phosphorylation of the position 2 hydroxy group of 4-diphosphocytidyl-2C-methyl-D-erythritol. The chain is 4-diphosphocytidyl-2-C-methyl-D-erythritol kinase from Cereibacter sphaeroides (strain KD131 / KCTC 12085) (Rhodobacter sphaeroides).